Reading from the N-terminus, the 431-residue chain is Ammonium transporter 3 (431 aa).

The Extracellular segment spans residues M1 to S27. A helical membrane pass occupies residues W28–A48. The Cytoplasmic portion of the chain corresponds to G49–N63. A helical transmembrane segment spans residues L64–G84. The Extracellular segment spans residues K85–Y102. The helical transmembrane segment at T103–A125 threads the bilayer. Residues M126–C134 are Cytoplasmic-facing. The chain crosses the membrane as a helical span at residues Y135–W155. At S156 to W160 the chain is on the extracellular side. The helical transmembrane segment at L161 to I181 threads the bilayer. The Cytoplasmic segment spans residues T182–S211. The helical transmembrane segment at V212–G232 threads the bilayer. At A233–S249 the chain is on the extracellular side. A helical membrane pass occupies residues V250–F270. Residues N271–W300 lie on the Cytoplasmic side of the membrane. The chain crosses the membrane as a helical span at residues A301–L321. Residues N322 to T333 lie on the Extracellular side of the membrane. Residues A334–G354 traverse the membrane as a helical segment. The Cytoplasmic portion of the chain corresponds to R355–R357. Residues N358 to V378 traverse the membrane as a helical segment. Q379 is a topological domain (extracellular). Residues L380 to T400 traverse the membrane as a helical segment. The Cytoplasmic portion of the chain corresponds to M401–D431.

The protein belongs to the ammonia transporter channel (TC 1.A.11.2) family.

The protein localises to the cell membrane. It is found in the endosome membrane. The protein resides in the cytoplasmic vesicle. It localises to the phagosome membrane. In terms of biological role, ammonium transporter that mediates the import of ammonium in prespore cells. Controls ammonium homeostasis during growth and development. Ammonium has been shown to function as a morphogen at multiple steps during the development. May function as an ammonia sensor that relays information concerning ammonia concentrations to the signaling pathway involved in the slug versus culmination choice and regulates prestalk gene expression. The chain is Ammonium transporter 3 (amtC) from Dictyostelium discoideum (Social amoeba).